Reading from the N-terminus, the 121-residue chain is UPF0102 protein BT_2236 (121 aa).

Belongs to the UPF0102 family.

The sequence is that of UPF0102 protein BT_2236 from Bacteroides thetaiotaomicron (strain ATCC 29148 / DSM 2079 / JCM 5827 / CCUG 10774 / NCTC 10582 / VPI-5482 / E50).